A 60-amino-acid chain; its full sequence is Movement protein TGBp3 (60 aa).

The Lumenal segment spans residues 1–6 (MHYIDW). A helical membrane pass occupies residues 7-23 (VILLTFAAALIVCLTPK). Residues 24–60 (PEPCIITVSGASATVSNCPNPELLTDLVKALKPAKPV) are Cytoplasmic-facing.

It belongs to the Tymovirales TGBp3 protein family.

The protein resides in the host endoplasmic reticulum membrane. Plays a role in viral cell-to-cell propagation, by facilitating genome transport to neighboring plant cells through plasmosdesmata. May induce the formation of granular vesicles derived from the Endoplasmic reticulum, which align on actin filaments. This Citrus (ICRSV) protein is Movement protein TGBp3.